We begin with the raw amino-acid sequence, 716 residues long: DNA ligase (716 aa).

Residues 50 to 54 (DAEYD), 99 to 100 (SL), and Glu132 contribute to the NAD(+) site. Lys134 acts as the N6-AMP-lysine intermediate in catalysis. NAD(+)-binding residues include Arg155, Glu192, Lys308, and Lys332. Positions 437, 439, 461, and 467 each coordinate Zn(2+). One can recognise a BRCT domain in the interval 638–716 (KSNSAVAGKT…EDEWLKLIGE (79 aa)).

Belongs to the NAD-dependent DNA ligase family. LigA subfamily. Mg(2+) is required as a cofactor. Requires Mn(2+) as cofactor.

It catalyses the reaction NAD(+) + (deoxyribonucleotide)n-3'-hydroxyl + 5'-phospho-(deoxyribonucleotide)m = (deoxyribonucleotide)n+m + AMP + beta-nicotinamide D-nucleotide.. Its function is as follows. DNA ligase that catalyzes the formation of phosphodiester linkages between 5'-phosphoryl and 3'-hydroxyl groups in double-stranded DNA using NAD as a coenzyme and as the energy source for the reaction. It is essential for DNA replication and repair of damaged DNA. The polypeptide is DNA ligase (Bradyrhizobium diazoefficiens (strain JCM 10833 / BCRC 13528 / IAM 13628 / NBRC 14792 / USDA 110)).